A 252-amino-acid chain; its full sequence is Pyridoxine 5'-phosphate synthase (252 aa).

Asn7 contributes to the 3-amino-2-oxopropyl phosphate binding site. Residue 9-10 (DH) participates in 1-deoxy-D-xylulose 5-phosphate binding. Arg18 provides a ligand contact to 3-amino-2-oxopropyl phosphate. His43 functions as the Proton acceptor in the catalytic mechanism. 1-deoxy-D-xylulose 5-phosphate-binding residues include Arg45 and His50. The active-site Proton acceptor is the Glu70. Residue Thr100 participates in 1-deoxy-D-xylulose 5-phosphate binding. The active-site Proton donor is the His190. 3-amino-2-oxopropyl phosphate contacts are provided by residues Gly191 and 212-213 (GH).

This sequence belongs to the PNP synthase family. Homooctamer; tetramer of dimers.

The protein localises to the cytoplasm. It carries out the reaction 3-amino-2-oxopropyl phosphate + 1-deoxy-D-xylulose 5-phosphate = pyridoxine 5'-phosphate + phosphate + 2 H2O + H(+). It participates in cofactor biosynthesis; pyridoxine 5'-phosphate biosynthesis; pyridoxine 5'-phosphate from D-erythrose 4-phosphate: step 5/5. In terms of biological role, catalyzes the complicated ring closure reaction between the two acyclic compounds 1-deoxy-D-xylulose-5-phosphate (DXP) and 3-amino-2-oxopropyl phosphate (1-amino-acetone-3-phosphate or AAP) to form pyridoxine 5'-phosphate (PNP) and inorganic phosphate. This chain is Pyridoxine 5'-phosphate synthase, found in Synechococcus sp. (strain RCC307).